The following is a 22-amino-acid chain: Sex pheromone inhibitor determinant (22 aa).

Residues 1–14 (MSKRAMKKIIPLIT) constitute a propeptide that is removed on maturation.

Its subcellular location is the secreted. Functionally, acts as a competitive inhibitor of the CAD1 pheromone. This is Sex pheromone inhibitor determinant (iad) from Enterococcus faecalis (strain ATCC 700802 / V583).